Reading from the N-terminus, the 76-residue chain is Large ribosomal subunit protein eL20 (76 aa).

This sequence belongs to the eukaryotic ribosomal protein eL20 family. As to quaternary structure, part of the 50S ribosomal subunit. Binds 23S rRNA.

The chain is Large ribosomal subunit protein eL20 from Methanococcus maripaludis (strain DSM 14266 / JCM 13030 / NBRC 101832 / S2 / LL).